Consider the following 467-residue polypeptide: Actinorhodin polyketide putative beta-ketoacyl synthase 1 (467 aa).

A disordered region spans residues 1-35; it reads MPLDAAPVDPASRGPVSAFEPPSSHGADDDDDHRT. Positions 45 to 459 constitute a Ketosynthase family 3 (KS3) domain; the sequence is KRRVVITGVG…GFQSAMVLRD (415 aa). Residues cysteine 212, histidine 352, and histidine 389 each act as for beta-ketoacyl synthase activity in the active site.

It belongs to the thiolase-like superfamily. Beta-ketoacyl-ACP synthases family.

Its pathway is antibiotic biosynthesis; actinorhodin biosynthesis. The polypeptide is Actinorhodin polyketide putative beta-ketoacyl synthase 1 (Streptomyces coelicolor (strain ATCC BAA-471 / A3(2) / M145)).